Consider the following 553-residue polypeptide: RNA exonuclease 1 (553 aa).

Phosphoserine is present on serine 24. Residues 167 to 194 (MEKINKLKELQKKKKITINDLVLSEQQL) adopt a coiled-coil conformation. Residues 225 to 373 (IFALDCEMCL…EDARACLELT (149 aa)) form the Exonuclease domain. A coiled-coil region spans residues 509-533 (WNNLSTELEFIQDKKERLDKRRERE).

Belongs to the REXO1/REXO3 family.

It is found in the nucleus. In terms of biological role, 3' exoribonuclease required for 5S rRNA maturation and for the proper maturation of the 5' cistron of the tRNA-Arg3 dicistronic gene. Involved with REX2 in the maturation of the 5.8S rRNA, and with REX2 and REX3, in the 3' processing of the U5L snRNA. This is RNA exonuclease 1 (RNH70) from Saccharomyces cerevisiae (strain ATCC 204508 / S288c) (Baker's yeast).